The primary structure comprises 497 residues: Probable cytosol aminopeptidase (497 aa).

The Mn(2+) site is built by Lys263 and Asp268. The active site involves Lys275. Mn(2+) contacts are provided by Asp286, Asp345, and Glu347. Residue Arg349 is part of the active site.

The protein belongs to the peptidase M17 family. Requires Mn(2+) as cofactor.

It localises to the cytoplasm. It catalyses the reaction Release of an N-terminal amino acid, Xaa-|-Yaa-, in which Xaa is preferably Leu, but may be other amino acids including Pro although not Arg or Lys, and Yaa may be Pro. Amino acid amides and methyl esters are also readily hydrolyzed, but rates on arylamides are exceedingly low.. It carries out the reaction Release of an N-terminal amino acid, preferentially leucine, but not glutamic or aspartic acids.. In terms of biological role, presumably involved in the processing and regular turnover of intracellular proteins. Catalyzes the removal of unsubstituted N-terminal amino acids from various peptides. This Methylorubrum populi (strain ATCC BAA-705 / NCIMB 13946 / BJ001) (Methylobacterium populi) protein is Probable cytosol aminopeptidase.